The following is a 438-amino-acid chain: GTPase Der (438 aa).

EngA-type G domains lie at 2-164 (HKVA…PEDD) and 173-343 (IRIS…EKWQ). Residues 8-15 (GRPNVGKS), 55-59 (DTGGL), 116-119 (NKID), 179-186 (GRPNVGKS), 226-230 (DTAGI), and 288-291 (NKWD) each bind GTP. The region spanning 344-428 (SRIGTSELNR…PVRLKWKEKG (85 aa)) is the KH-like domain.

Belongs to the TRAFAC class TrmE-Era-EngA-EngB-Septin-like GTPase superfamily. EngA (Der) GTPase family. As to quaternary structure, associates with the 50S ribosomal subunit.

Functionally, GTPase that plays an essential role in the late steps of ribosome biogenesis. The protein is GTPase Der of Deinococcus radiodurans (strain ATCC 13939 / DSM 20539 / JCM 16871 / CCUG 27074 / LMG 4051 / NBRC 15346 / NCIMB 9279 / VKM B-1422 / R1).